The following is a 200-amino-acid chain: Cleavage and polyadenylation specificity factor subunit 5 (200 aa).

Positions 45–170 constitute a Nudix hydrolase domain; it reads LRKAVEGIII…LSLIAVSLYE (126 aa). The interval 70 to 72 is interaction with RNA; that stretch reads NYF. Positions 77-98 match the Nudix box motif; the sequence is GKLKPGENEIDGLIRKLTKKLS.

It belongs to the Nudix hydrolase family. CPSF5 subfamily. Homodimer (via N- and C-terminus); binds RNA as homodimer. Component of the cleavage factor Im (CFIm) complex.

The protein resides in the nucleus. Its subcellular location is the cytoplasm. Its function is as follows. Component of the cleavage factor Im (CFIm) complex that functions as an activator of the pre-mRNA 3'-end cleavage and polyadenylation processing required for the maturation of pre-mRNA into functional mRNAs. CFIm contributes to the recruitment of multiprotein complexes on specific sequences on the pre-mRNA 3'-end, so called cleavage and polyadenylation signals (pA signals). Most pre-mRNAs contain multiple pA signals, resulting in alternative cleavage and polyadenylation (APA) producing mRNAs with variable 3'-end formation. The CFIm complex acts as a key regulator of cleavage and polyadenylation site choice during APA through its binding to 5'-UGUA-3' elements localized in the 3'-untranslated region (UTR) for a huge number of pre-mRNAs. Binds to 5'-UGUA-3' elements localized upstream of pA signals that act as enhancers of pre-mRNA 3'-end processing. The homodimer mediates simultaneous sequence-specific recognition of two 5'-UGUA-3' elements within the pre-mRNA. Plays a role in somatic cell fate transitions and pluripotency by regulating widespread changes in gene expression through an APA-dependent function. Binds to chromatin. The sequence is that of Cleavage and polyadenylation specificity factor subunit 5 from Dictyostelium discoideum (Social amoeba).